Consider the following 199-residue polypeptide: Minor spike protein H (199 aa).

Positions 171 to 199 are disordered; sequence EDSNGPRLSNLREEKKPNQMPLKNGKLNT.

This sequence belongs to the microviridae H protein family.

Its subcellular location is the virion. Functionally, probably triggers with protein G the injection of the phage DNA into the host upon conformational changes induced by virus-host receptor interaction. In Bdellovibrio bacteriovorus (Bacteriophage phiMH2K), this protein is Minor spike protein H.